Reading from the N-terminus, the 269-residue chain is Imidazoleglycerol-phosphate dehydratase 2, chloroplastic (269 aa).

A chloroplast-targeting transit peptide spans 1 to 51 (MTTAPFLFPSLSRLHSARASSFPKPPVGSGAGVAFPARPYGSSLRLRSSVM). Substrate is bound by residues E83, 109–117 (HMLDQLASH), 135–139 (HHSNE), R161, and R183. Mn(2+) is bound by residues H109, H135, H136, and E139. 4 residues coordinate Mn(2+): H207, H231, H232, and E235. Substrate contacts are provided by residues 231 to 239 (HHIIEATFK) and 261 to 263 (SSK).

Belongs to the imidazoleglycerol-phosphate dehydratase family. The cofactor is Mn(2+).

The protein resides in the plastid. Its subcellular location is the chloroplast. It carries out the reaction D-erythro-1-(imidazol-4-yl)glycerol 3-phosphate = 3-(imidazol-4-yl)-2-oxopropyl phosphate + H2O. It functions in the pathway amino-acid biosynthesis; L-histidine biosynthesis; L-histidine from 5-phospho-alpha-D-ribose 1-diphosphate: step 6/9. The sequence is that of Imidazoleglycerol-phosphate dehydratase 2, chloroplastic from Triticum aestivum (Wheat).